A 211-amino-acid chain; its full sequence is MRIGILGGTFDPIHLGHINPALDVKQQLHLDQIWLMPNHIPPHKNTTVVSTHHRLEMVKLVCQQYPEFKLCDIEINRDTPSYSVTTLTLLTQQYPDDEFFFIMGMDSFVQLPLWYQWQSLFNLCHIALCQRPGWAMDTNSEMTKELLFRQATADYLDSPSHAKNGRIFTINSQLVDISSTEIRQQLAQNIDISTVLSQTTTEYIRQHQLYR.

This sequence belongs to the NadD family.

It carries out the reaction nicotinate beta-D-ribonucleotide + ATP + H(+) = deamido-NAD(+) + diphosphate. It functions in the pathway cofactor biosynthesis; NAD(+) biosynthesis; deamido-NAD(+) from nicotinate D-ribonucleotide: step 1/1. Its function is as follows. Catalyzes the reversible adenylation of nicotinate mononucleotide (NaMN) to nicotinic acid adenine dinucleotide (NaAD). This is Probable nicotinate-nucleotide adenylyltransferase from Shewanella frigidimarina (strain NCIMB 400).